Reading from the N-terminus, the 141-residue chain is ATP synthase epsilon chain 1 (141 aa).

The protein belongs to the ATPase epsilon chain family. In terms of assembly, F-type ATPases have 2 components, CF(1) - the catalytic core - and CF(0) - the membrane proton channel. CF(1) has five subunits: alpha(3), beta(3), gamma(1), delta(1), epsilon(1). CF(0) has three main subunits: a, b and c.

It localises to the cell inner membrane. Functionally, produces ATP from ADP in the presence of a proton gradient across the membrane. In Paraburkholderia xenovorans (strain LB400), this protein is ATP synthase epsilon chain 1.